We begin with the raw amino-acid sequence, 485 residues long: Benzaldehyde dehydrogenase YfmT (485 aa).

Position 231–236 (231–236) interacts with NAD(+); the sequence is GSTKVG. Active-site residues include Glu-253 and Cys-287.

The protein belongs to the aldehyde dehydrogenase family.

The enzyme catalyses benzaldehyde + NAD(+) + H2O = benzoate + NADH + 2 H(+). It catalyses the reaction vanillin + NAD(+) + H2O = vanillate + NADH + 2 H(+). Functionally, a benzaldehyde dehydrogenase able to act on substrates with 3- and 4-hydroxy and methoxy substitutions; converts vanillin (4-hydroxy-3-methoxybenzaldehyde) to vanillic acid in vitro. The physiological substrate is unknown. In Bacillus subtilis (strain 168), this protein is Benzaldehyde dehydrogenase YfmT (yfmT).